A 217-amino-acid polypeptide reads, in one-letter code: Lectin ADEL (217 aa).

5 disulfides stabilise this stretch: cysteine 5-cysteine 187, cysteine 42-cysteine 68, cysteine 61-cysteine 77, cysteine 114-cysteine 135, and cysteine 142-cysteine 206. N-linked (GlcNAc...) asparagine glycosylation is present at asparagine 30. N-linked (GlcNAc...) asparagine glycans are attached at residues asparagine 102 and asparagine 126.

In terms of assembly, homodimer; disulfide-linked. In terms of processing, contains disulfide bonds.

Binds in decreasing order of affinity: galacturonic acid, D-galactosamine, methyl-alpha-D-galactopyranoside and further galactose-containing carbohydrates. Has hemagglutinating activity against human and rabbit erythrocytes. The polypeptide is Lectin ADEL (Aplysia dactylomela (Spotted sea hare)).